The following is an 88-amino-acid chain: ATP synthase subunit c (88 aa).

Helical transmembrane passes span Ile-10–Ile-30 and Gly-68–Leu-88.

Belongs to the ATPase C chain family. F-type ATPases have 2 components, F(1) - the catalytic core - and F(0) - the membrane proton channel. F(1) has five subunits: alpha(3), beta(3), gamma(1), delta(1), epsilon(1). F(0) has three main subunits: a(1), b(2) and c(10-14). The alpha and beta chains form an alternating ring which encloses part of the gamma chain. F(1) is attached to F(0) by a central stalk formed by the gamma and epsilon chains, while a peripheral stalk is formed by the delta and b chains.

It localises to the cell membrane. Its function is as follows. F(1)F(0) ATP synthase produces ATP from ADP in the presence of a proton or sodium gradient. F-type ATPases consist of two structural domains, F(1) containing the extramembraneous catalytic core and F(0) containing the membrane proton channel, linked together by a central stalk and a peripheral stalk. During catalysis, ATP synthesis in the catalytic domain of F(1) is coupled via a rotary mechanism of the central stalk subunits to proton translocation. Functionally, key component of the F(0) channel; it plays a direct role in translocation across the membrane. A homomeric c-ring of between 10-14 subunits forms the central stalk rotor element with the F(1) delta and epsilon subunits. The sequence is that of ATP synthase subunit c from Alkaliphilus oremlandii (strain OhILAs) (Clostridium oremlandii (strain OhILAs)).